Consider the following 74-residue polypeptide: UPF0435 protein GTNG_0390 (74 aa).

This sequence belongs to the UPF0435 family.

The protein is UPF0435 protein GTNG_0390 of Geobacillus thermodenitrificans (strain NG80-2).